We begin with the raw amino-acid sequence, 313 residues long: HPr kinase/phosphorylase (313 aa).

Catalysis depends on residues histidine 141 and lysine 162. An ATP-binding site is contributed by 156–163; it reads GKSGIGKS. Mg(2+) is bound at residue serine 163. The active-site Proton acceptor; for phosphorylation activity. Proton donor; for dephosphorylation activity is the aspartate 180. The interval 203–212 is important for the catalytic mechanism of both phosphorylation and dephosphorylation; the sequence is IEIRGIGIFD. Glutamate 204 is a binding site for Mg(2+). Residue arginine 247 is part of the active site. An important for the catalytic mechanism of dephosphorylation region spans residues 268–273; that stretch reads PVSAGR.

Belongs to the HPrK/P family. In terms of assembly, homohexamer. The cofactor is Mg(2+).

It catalyses the reaction [HPr protein]-L-serine + ATP = [HPr protein]-O-phospho-L-serine + ADP + H(+). The catalysed reaction is [HPr protein]-O-phospho-L-serine + phosphate + H(+) = [HPr protein]-L-serine + diphosphate. Its function is as follows. Catalyzes the ATP- as well as the pyrophosphate-dependent phosphorylation of a specific serine residue in HPr, a phosphocarrier protein of the phosphoenolpyruvate-dependent sugar phosphotransferase system (PTS). HprK/P also catalyzes the pyrophosphate-producing, inorganic phosphate-dependent dephosphorylation (phosphorolysis) of seryl-phosphorylated HPr (P-Ser-HPr). The two antagonistic activities of HprK/P are regulated by several intracellular metabolites, which change their concentration in response to the absence or presence of rapidly metabolisable carbon sources (glucose, fructose, etc.) in the growth medium. Therefore, by controlling the phosphorylation state of HPr, HPrK/P is a sensor enzyme that plays a major role in the regulation of carbon metabolism and sugar transport: it mediates carbon catabolite repression (CCR), and regulates PTS-catalyzed carbohydrate uptake and inducer exclusion. The polypeptide is HPr kinase/phosphorylase (Mycoplasma mycoides subsp. mycoides SC (strain CCUG 32753 / NCTC 10114 / PG1)).